A 544-amino-acid chain; its full sequence is Chaperonin GroEL 2 (544 aa).

Residues 30 to 33 (TLGP), Lys-51, 87 to 91 (DGTTT), Gly-415, and Asp-496 contribute to the ATP site.

It belongs to the chaperonin (HSP60) family. Forms a cylinder of 14 subunits composed of two heptameric rings stacked back-to-back. Interacts with the co-chaperonin GroES.

The protein localises to the cytoplasm. The catalysed reaction is ATP + H2O + a folded polypeptide = ADP + phosphate + an unfolded polypeptide.. Functionally, together with its co-chaperonin GroES, plays an essential role in assisting protein folding. The GroEL-GroES system forms a nano-cage that allows encapsulation of the non-native substrate proteins and provides a physical environment optimized to promote and accelerate protein folding. In Rhizobium johnstonii (strain DSM 114642 / LMG 32736 / 3841) (Rhizobium leguminosarum bv. viciae), this protein is Chaperonin GroEL 2.